Consider the following 645-residue polypeptide: UvrABC system protein C (645 aa).

The disordered stretch occupies residues Met1–Val20. The GIY-YIG domain occupies Tyr40 to Ile118. A UVR domain is found at Thr228–Ile263.

This sequence belongs to the UvrC family. As to quaternary structure, interacts with UvrB in an incision complex.

The protein localises to the cytoplasm. The UvrABC repair system catalyzes the recognition and processing of DNA lesions. UvrC both incises the 5' and 3' sides of the lesion. The N-terminal half is responsible for the 3' incision and the C-terminal half is responsible for the 5' incision. The sequence is that of UvrABC system protein C from Gluconobacter oxydans (strain 621H) (Gluconobacter suboxydans).